The primary structure comprises 874 residues: Probable inorganic carbon transporter subunit DabA (874 aa).

Cysteine 398, aspartate 400, histidine 580, and cysteine 595 together coordinate Zn(2+).

This sequence belongs to the inorganic carbon transporter (TC 9.A.2) DabA family. In terms of assembly, forms a complex with DabB. The cofactor is Zn(2+).

It localises to the cell membrane. Part of an energy-coupled inorganic carbon pump. The sequence is that of Probable inorganic carbon transporter subunit DabA from Bacillus cytotoxicus (strain DSM 22905 / CIP 110041 / 391-98 / NVH 391-98).